A 278-amino-acid chain; its full sequence is Sulfur carrier protein FdhD (278 aa).

Residue cysteine 121 is the Cysteine persulfide intermediate of the active site. 260–265 (FCKPGR) is a Mo-bis(molybdopterin guanine dinucleotide) binding site.

The protein belongs to the FdhD family.

It is found in the cytoplasm. Functionally, required for formate dehydrogenase (FDH) activity. Acts as a sulfur carrier protein that transfers sulfur from IscS to the molybdenum cofactor prior to its insertion into FDH. The sequence is that of Sulfur carrier protein FdhD from Salmonella paratyphi A (strain ATCC 9150 / SARB42).